An 80-amino-acid chain; its full sequence is Large ribosomal subunit protein bL31B (80 aa).

The protein belongs to the bacterial ribosomal protein bL31 family. Type B subfamily. As to quaternary structure, part of the 50S ribosomal subunit.

The protein is Large ribosomal subunit protein bL31B of Streptococcus thermophilus (strain CNRZ 1066).